The following is a 120-amino-acid chain: uncharacterized protein (120 aa).

The Nudix hydrolase domain occupies 29-120 (QRQAAVLVPI…QVTPVVGIIP (92 aa)). The short motif at 67–89 (GAVDNSDATLIAAALREAQEEVA) is the Nudix box element. Positions 83 and 87 each coordinate Mg(2+).

Belongs to the Nudix hydrolase family. PCD1 subfamily. Requires Mn(2+) as cofactor. Mg(2+) serves as cofactor.

Probably mediates the hydrolysis of some nucleoside diphosphate derivatives. This is an uncharacterized protein from Klebsiella aerogenes (Enterobacter aerogenes).